The following is a 110-amino-acid chain: Small ribosomal subunit protein eS24 (110 aa).

The tract at residues 91 to 110 (RNKVEEQAEEAEEAEAGAAE) is disordered. Positions 97–110 (QAEEAEEAEAGAAE) are enriched in acidic residues.

This sequence belongs to the eukaryotic ribosomal protein eS24 family.

This chain is Small ribosomal subunit protein eS24, found in Archaeoglobus fulgidus (strain ATCC 49558 / DSM 4304 / JCM 9628 / NBRC 100126 / VC-16).